The following is a 598-amino-acid chain: Acetylcholine receptor subunit alpha-type acr-5 (598 aa).

An N-terminal signal peptide occupies residues 1-16 (MLPNIILILLIRYCSC). The Extracellular segment spans residues 17 to 323 (GAGSRVYEKY…HLVIRRKPLY (307 aa)). 6 N-linked (GlcNAc...) asparagine glycosylation sites follow: asparagine 54, asparagine 71, asparagine 77, asparagine 134, asparagine 178, and asparagine 252. A helical transmembrane segment spans residues 324–344 (YMINLVVPTSIITIVAVTGFF). The Cytoplasmic portion of the chain corresponds to 345–356 (TPTSSSSERDEK). The helical transmembrane segment at 357-377 (LYLGINTLLTMSVMMLMVCNQ) threads the bilayer. At 378-391 (MPSTSTYVPLMSWY) the chain is on the extracellular side. The chain crosses the membrane as a helical span at residues 392–412 (YIGIIMVIVVGTFLATGVLAI). Over 413–563 (HGQKHYNKPI…WEFLANVLDR (151 aa)) the chain is Cytoplasmic. A helical transmembrane segment spans residues 564–584 (ILLTIFCGFTFAVFIILIGFD). Over 585–598 (SFFTFHTDSPPKTM) the chain is Extracellular.

Belongs to the ligand-gated ion channel (TC 1.A.9) family. Acetylcholine receptor (TC 1.A.9.1) subfamily.

The protein localises to the postsynaptic cell membrane. Its subcellular location is the cell membrane. Its function is as follows. Subunit of nicotinic acetylcholine receptor (nAChR). Involved in nAChR sensitivity to nicotine. Modulates locomotion towards the drug nicotine. This is Acetylcholine receptor subunit alpha-type acr-5 from Caenorhabditis elegans.